Consider the following 885-residue polypeptide: DNA mismatch repair protein MutS (885 aa).

A disordered region spans residues 1-67; that stretch reads MAPGEQQLSL…SNNDDEGLPR (67 aa). The segment covering 26–36 has biased composition (basic and acidic residues); that stretch reads SEDKTEESERP. An ATP-binding site is contributed by 691 to 698; that stretch reads GPNASGKS.

The protein belongs to the DNA mismatch repair MutS family.

This protein is involved in the repair of mismatches in DNA. It is possible that it carries out the mismatch recognition step. This protein has a weak ATPase activity. The chain is DNA mismatch repair protein MutS from Synechococcus sp. (strain RCC307).